A 261-amino-acid polypeptide reads, in one-letter code: Na(+)-translocating NADH-quinone reductase subunit C (261 aa).

Residues 11 to 31 (LLVALVVCLVSSVFVAGAAVA) traverse the membrane as a helical segment. FMN phosphoryl threonine is present on T230.

Belongs to the NqrC family. Composed of six subunits; NqrA, NqrB, NqrC, NqrD, NqrE and NqrF. FMN is required as a cofactor.

It localises to the cell inner membrane. The catalysed reaction is a ubiquinone + n Na(+)(in) + NADH + H(+) = a ubiquinol + n Na(+)(out) + NAD(+). Its function is as follows. NQR complex catalyzes the reduction of ubiquinone-1 to ubiquinol by two successive reactions, coupled with the transport of Na(+) ions from the cytoplasm to the periplasm. NqrA to NqrE are probably involved in the second step, the conversion of ubisemiquinone to ubiquinol. In Pseudomonas aeruginosa (strain ATCC 15692 / DSM 22644 / CIP 104116 / JCM 14847 / LMG 12228 / 1C / PRS 101 / PAO1), this protein is Na(+)-translocating NADH-quinone reductase subunit C.